The chain runs to 240 residues: UDP-2,3-diacylglucosamine hydrolase (240 aa).

Mn(2+) is bound by residues aspartate 8, histidine 10, aspartate 41, asparagine 78, and histidine 113. Residue 78–79 (NR) participates in substrate binding. 5 residues coordinate substrate: aspartate 121, serine 159, asparagine 163, lysine 166, and histidine 194. 2 residues coordinate Mn(2+): histidine 194 and histidine 196.

Belongs to the LpxH family. Mn(2+) serves as cofactor.

It is found in the cell inner membrane. It catalyses the reaction UDP-2-N,3-O-bis[(3R)-3-hydroxytetradecanoyl]-alpha-D-glucosamine + H2O = 2-N,3-O-bis[(3R)-3-hydroxytetradecanoyl]-alpha-D-glucosaminyl 1-phosphate + UMP + 2 H(+). It functions in the pathway glycolipid biosynthesis; lipid IV(A) biosynthesis; lipid IV(A) from (3R)-3-hydroxytetradecanoyl-[acyl-carrier-protein] and UDP-N-acetyl-alpha-D-glucosamine: step 4/6. Functionally, hydrolyzes the pyrophosphate bond of UDP-2,3-diacylglucosamine to yield 2,3-diacylglucosamine 1-phosphate (lipid X) and UMP by catalyzing the attack of water at the alpha-P atom. Involved in the biosynthesis of lipid A, a phosphorylated glycolipid that anchors the lipopolysaccharide to the outer membrane of the cell. The sequence is that of UDP-2,3-diacylglucosamine hydrolase from Shewanella baltica (strain OS185).